Consider the following 35-residue polypeptide: Turripeptide gsp9a (35 aa).

4-hydroxyproline is present on residues Pro-3 and Pro-4. 3 cysteine pairs are disulfide-bonded: Cys-7–Cys-22, Cys-12–Cys-26, and Cys-18–Cys-33. 4-carboxyglutamate occurs at positions 14 and 17.

In terms of tissue distribution, expressed by the venom duct.

It localises to the secreted. In Gemmula speciosa (Splendid gem-turris), this protein is Turripeptide gsp9a.